A 216-amino-acid chain; its full sequence is uncharacterized protein (216 aa).

This is an uncharacterized protein from Treponema pallidum (strain Nichols).